The primary structure comprises 617 residues: E3 ubiquitin-protein ligase synoviolin (617 aa).

Residues 1–4 are Cytoplasmic-facing; the sequence is MFRT. Residues 1–84 form a necessary and sufficient for SEL1L interaction region; sequence MFRTAVMMAA…EHLLERSWYA (84 aa). The segment at 1–251 is involved in FAM8A1 interaction; sequence MFRTAVMMAA…LFAIRPMYLA (251 aa). A helical membrane pass occupies residues 5-25; sequence AVMMAASLALTGAVVAHAYYL. Residues 26-41 are Lumenal-facing; sequence KHQFYPTVVYLTKSSP. Residues 42 to 62 form a helical membrane-spanning segment; sequence SMAVLYIQAFVLVFLLGKVMG. The Cytoplasmic segment spans residues 63–98; sequence KVFFGQLRAAEMEHLLERSWYAVTETCLAFTVFRDD. A helical transmembrane segment spans residues 99–119; that stretch reads FSPRFVALFTLLLFLKCFHWL. Over 120 to 140 the chain is Lumenal; the sequence is AEDRVDFMERSPNISWLFHCR. Residues 141–161 traverse the membrane as a helical segment; the sequence is IVSLMFLLGILDFLFVSHAYH. Residues 162-169 are Cytoplasmic-facing; the sequence is SILTRGAS. Residues 170–190 form a helical membrane-spanning segment; sequence VQLVFGFEYAILMTMVLTIFI. The Lumenal portion of the chain corresponds to 191–224; the sequence is KYVLHSVDLQSENPWDNKAVYMLYTELFTGFIKV. The chain crosses the membrane as a helical span at residues 225–245; sequence LLYMAFMTIMIKVHTFPLFAI. The interaction with p53/TP53 stretch occupies residues 236–270; it reads KVHTFPLFAIRPMYLAMRQFKKAVTDAIMSRRAIR. Residues 246 to 617 lie on the Cytoplasmic side of the membrane; sequence RPMYLAMRQF…LQKLESPVAH (372 aa). Cys-291, Cys-294, Cys-307, His-309, His-312, Cys-315, Cys-326, and Cys-329 together coordinate Zn(2+). Residues 291–330 form an RING-type; atypical zinc finger; it reads CIICREEMVTGAKRLPCNHIFHTSCLRSWFQRQQTCPTCR. 3 disordered regions span residues 337–375, 393–453, and 535–617; these read SLPA…GLLP, PVPP…PAPG, and RPAT…PVAH. Pro residues predominate over residues 341-375; it reads QSPPPPEPADQGPPPAPHPPPLLPQPPNFPQGLLP. Residues 417–451 are compositionally biased toward low complexity; sequence PSGAATTTAAGTSATAASATASGPGSGSAPEAGPA. Residues 480–535 are HAF-H domain; necessary to form higher-order Hrd1 complexes; the sequence is GFAGLTPEELRALEGHERQHLEARLQSLRNIHTLLDAAMLQINQYLTVLASLGPPR. Positions 537–569 are enriched in low complexity; sequence ATSVNSTEETATTVVAAASSTSIPSSEATTPTP. Over residues 591-600 the composition is skewed to acidic residues; the sequence is EMPEDGEPDA. Residue Ser-613 is modified to Phosphoserine.

Belongs to the HRD1 family. As to quaternary structure, homodimer. Interacts with p53/TP53. Interacts with HTT. Component of the HRD1 complex, which comprises at least SYNV1/HRD1, DERL1/2, FAM8A1, HERPUD1/HERP, OS9, SEL1L and UBE2J1. FAM8A1 is stabilized by interaction with SYNV1, which prevents its proteasomal degradation. OS9 and UBE2J1 recruitment to the complex may be mediated by SEL1L. SYNV1 assembles with SEL1L and FAM8A1 through its transmembrane domains, but interaction with its cytoplasmic domain is required to confer stability to FAM8A1 and enhance recruitment of HERPUD1. The HRD1 complex also associates with VIMP and may transfer misfolded proteins from the endoplasmic reticulum to VCP. May form a complex with ERLEC1, HSPA5, OS9 and SEL1L. Interacts with VCP. Interacts with UBXN6. Interacts with BAG6. Interacts with NFE2L1. Interacts (via N-terminus) with components of the pre-B cell receptor, including IGLL1 and VPREB1. Interacts with CREB3L3; this interaction leads to CREB3L3 ubiquitination and proteasomal degradation. Not N-glycosylated. In terms of processing, auto-ubiquitinated. Deubiquitinated by USP19. In terms of tissue distribution, ubiquitously expressed, with highest levels in liver and kidney (at protein level). Up-regulated in synovial tissues from patients with rheumatoid arthritis (at protein level).

The protein resides in the endoplasmic reticulum membrane. The catalysed reaction is S-ubiquitinyl-[E2 ubiquitin-conjugating enzyme]-L-cysteine + [acceptor protein]-L-lysine = [E2 ubiquitin-conjugating enzyme]-L-cysteine + N(6)-ubiquitinyl-[acceptor protein]-L-lysine.. Its pathway is protein modification; protein ubiquitination. In terms of biological role, E3 ubiquitin-protein ligase which accepts ubiquitin specifically from endoplasmic reticulum-associated UBC7 E2 ligase and transfers it to substrates, promoting their degradation. Component of the endoplasmic reticulum quality control (ERQC) system also called ER-associated degradation (ERAD) involved in ubiquitin-dependent degradation of misfolded endoplasmic reticulum proteins. Also promotes the degradation of normal but naturally short-lived proteins such as SGK. Protects cells from ER stress-induced apoptosis. Protects neurons from apoptosis induced by polyglutamine-expanded huntingtin (HTT) or unfolded GPR37 by promoting their degradation. Sequesters p53/TP53 in the cytoplasm and promotes its degradation, thereby negatively regulating its biological function in transcription, cell cycle regulation and apoptosis. Mediates the ubiquitination and subsequent degradation of cytoplasmic NFE2L1. During the early stage of B cell development, required for degradation of the pre-B cell receptor (pre-BCR) complex, hence supporting further differentiation into mature B cells. The protein is E3 ubiquitin-protein ligase synoviolin of Homo sapiens (Human).